The sequence spans 308 residues: Aspartate carbamoyltransferase catalytic subunit (308 aa).

Residues arginine 51 and threonine 52 each contribute to the carbamoyl phosphate site. Lysine 80 provides a ligand contact to L-aspartate. Carbamoyl phosphate is bound by residues arginine 101, histidine 129, and glutamine 132. Residues arginine 162 and arginine 224 each contribute to the L-aspartate site. Carbamoyl phosphate-binding residues include leucine 263 and proline 264.

It belongs to the aspartate/ornithine carbamoyltransferase superfamily. ATCase family. Heterododecamer (2C3:3R2) of six catalytic PyrB chains organized as two trimers (C3), and six regulatory PyrI chains organized as three dimers (R2).

It catalyses the reaction carbamoyl phosphate + L-aspartate = N-carbamoyl-L-aspartate + phosphate + H(+). Its pathway is pyrimidine metabolism; UMP biosynthesis via de novo pathway; (S)-dihydroorotate from bicarbonate: step 2/3. In terms of biological role, catalyzes the condensation of carbamoyl phosphate and aspartate to form carbamoyl aspartate and inorganic phosphate, the committed step in the de novo pyrimidine nucleotide biosynthesis pathway. The chain is Aspartate carbamoyltransferase catalytic subunit from Bacteroides fragilis (strain ATCC 25285 / DSM 2151 / CCUG 4856 / JCM 11019 / LMG 10263 / NCTC 9343 / Onslow / VPI 2553 / EN-2).